The primary structure comprises 170 residues: NADH-ubiquinone oxidoreductase chain 2 (170 aa).

4 consecutive transmembrane segments (helical) span residues 24 to 44 (LLWM…IMMF), 67 to 87 (FLIF…GFLP), 101 to 121 (LFIL…YLRL), and 150 to 170 (LILN…YMIL).

Belongs to the complex I subunit 2 family.

The protein localises to the mitochondrion inner membrane. The enzyme catalyses a ubiquinone + NADH + 5 H(+)(in) = a ubiquinol + NAD(+) + 4 H(+)(out). Its function is as follows. Core subunit of the mitochondrial membrane respiratory chain NADH dehydrogenase (Complex I) that is believed to belong to the minimal assembly required for catalysis. Complex I functions in the transfer of electrons from NADH to the respiratory chain. The immediate electron acceptor for the enzyme is believed to be ubiquinone. This is NADH-ubiquinone oxidoreductase chain 2 (ND2) from Anopheles albimanus (New world malaria mosquito).